We begin with the raw amino-acid sequence, 379 residues long: Putative phosphatidate phosphatase (379 aa).

Residues 1-53 (MPAVKIIMSTETSASETTPLRRSENETPDHKELAQSNSNSRQTTVNSNNNNYS) form a disordered region. The segment covering 9–18 (STETSASETT) has biased composition (polar residues). Residues 19 to 33 (PLRRSENETPDHKEL) show a composition bias toward basic and acidic residues. The span at 35–53 (QSNSNSRQTTVNSNNNNYS) shows a compositional bias: low complexity. The N-linked (GlcNAc...) asparagine glycan is linked to Asn-51. 2 helical membrane-spanning segments follow: residues 90–110 (VGLDVLILLCAGFPILLFFLL) and 138–158 (MLYFIGAVIPVGVIFIVEVII). N-linked (GlcNAc...) asparagine glycosylation occurs at Asn-169. 2 helical membrane passes run 266 to 286 (SFPSGHSSFTFFAMVYLALYL) and 330 to 350 (AGSLIGSISALVVANYVSDLF).

This sequence belongs to the PA-phosphatase related phosphoesterase family. As to quaternary structure, homodimer. This complex seems not to be involved in substrate recognition, it may confer only structural or functional stability. Expressed in embryonic gut in a pattern that guides germ cells towards mesoderm (initially in hindgut and then on lower side of gut). During extended germ band stage, expressed in ectoderm as a medial band throughout the trunk.

The protein localises to the membrane. It carries out the reaction a 1,2-diacyl-sn-glycero-3-phosphate + H2O = a 1,2-diacyl-sn-glycerol + phosphate. In terms of biological role, responsible for guiding the germ cells early in the process of migration from the lumen of the developing gut towards the overlying mesoderm, where the germ cells enter the gonads. May be involved in lipid metabolism. This chain is Putative phosphatidate phosphatase (wun), found in Drosophila melanogaster (Fruit fly).